A 422-amino-acid chain; its full sequence is Serpin A11 (422 aa).

The signal sequence occupies residues 1–24; sequence MGPVWLWLLIAELLLPVHYQPSSA. Residues 25 to 45 form a disordered region; sequence HGDKSLGAPQPASHQSLEPAP. Residues N106, N169, N350, and N385 are each glycosylated (N-linked (GlcNAc...) asparagine).

Belongs to the serpin family.

The protein localises to the secreted. This chain is Serpin A11 (Serpina11), found in Rattus norvegicus (Rat).